The chain runs to 1269 residues: Myb-binding protein 1A-like protein (1269 aa).

The tract at residues 708–783 (DPNKDEDESG…EEDEAMEEGQ (76 aa)) is disordered. Residues 721-730 (TDDKKRKLKE) are compositionally biased toward basic and acidic residues. Residues 731 to 783 (EDEDDDDEEEDDDNDEGDDDDDDDDEEEGGEEGEESSDSSDDEEEDEAMEEGQ) are compositionally biased toward acidic residues. At Ser810 the chain carries Phosphoserine. Residues 1163–1269 (VKKVPEAEQT…KKKKKGADGE (107 aa)) are disordered. Basic residues predominate over residues 1177-1195 (KKKKGFLPETKKRKNRKKP). Over residues 1199–1211 (EGKETETPVEKTP) the composition is skewed to basic and acidic residues. 2 stretches are compositionally biased toward basic residues: residues 1221–1232 (NKNKKKNKKRKQ) and 1256–1269 (KQKKKKKKKGADGE).

This sequence belongs to the MYBBP1A family.

It localises to the nucleus. It is found in the nucleolus. In terms of biological role, may activate or repress transcription via interactions with sequence specific DNA-binding proteins. May play a role in the repression of the circadian clock gene expression. The protein is Myb-binding protein 1A-like protein (mybbp1a) of Danio rerio (Zebrafish).